A 1109-amino-acid chain; its full sequence is Coiled-coil domain-containing protein 158 (1109 aa).

Residues 1–12 (MESKACESKNED) show a composition bias toward basic and acidic residues. The segment at 1–31 (MESKACESKNEDLLPSGITSKGGSSSPFFVT) is disordered. Residues 17 to 31 (GITSKGGSSSPFFVT) are compositionally biased toward polar residues. 2 coiled-coil regions span residues 71–166 (GKEH…MLKD) and 242–828 (VEDQ…QEQE). Disordered regions lie at residues 843-897 (LQGP…DPTR) and 952-1061 (HRSN…TGKT). 3 stretches are compositionally biased toward polar residues: residues 862 to 882 (ASVT…SFLS), 953 to 970 (RSNN…SSET), and 988 to 998 (SCFTFTSTASP). A compositionally biased stretch (low complexity) spans 999–1019 (SGKMSASRSFSSSPKKSPVHS). Polar residues-rich tracts occupy residues 1020-1037 (LLTS…QYRS) and 1043-1061 (SPTS…TGKT). A coiled-coil region spans residues 1053 to 1109 (PSLETTGKTCQKLQNRLESLQTLVEDLQLKNQAMSSMIRNQEKRIQKVKDQEKMLLK).

The sequence is that of Coiled-coil domain-containing protein 158 (Ccdc158) from Mus musculus (Mouse).